A 285-amino-acid chain; its full sequence is Polyamine aminopropyltransferase (285 aa).

The PABS domain maps to 5-241 (DNWYIEHFQP…GWWSVTMASK (237 aa)). Residue Q35 coordinates S-methyl-5'-thioadenosine. The spermidine site is built by H66 and D90. Residues D110 and 141 to 142 (DG) each bind S-methyl-5'-thioadenosine. Residue D160 is the Proton acceptor of the active site. 160 to 163 (DSTD) is a spermidine binding site. An S-methyl-5'-thioadenosine-binding site is contributed by P167.

This sequence belongs to the spermidine/spermine synthase family. As to quaternary structure, homodimer or homotetramer.

The protein localises to the cytoplasm. The enzyme catalyses S-adenosyl 3-(methylsulfanyl)propylamine + putrescine = S-methyl-5'-thioadenosine + spermidine + H(+). The protein operates within amine and polyamine biosynthesis; spermidine biosynthesis; spermidine from putrescine: step 1/1. In terms of biological role, catalyzes the irreversible transfer of a propylamine group from the amino donor S-adenosylmethioninamine (decarboxy-AdoMet) to putrescine (1,4-diaminobutane) to yield spermidine. The protein is Polyamine aminopropyltransferase of Xanthomonas campestris pv. campestris (strain 8004).